The chain runs to 856 residues: MAP kinase phosphatase with leucine-rich repeats protein 3 (856 aa).

Over residues M1–G10 the composition is skewed to low complexity. Disordered regions lie at residues M1–S24, V84–L195, and D214–D326. G2 is lipidated: N-myristoyl glycine. The segment covering G11 to S24 has biased composition (gly residues). Low complexity predominate over residues N90–Q142. A compositionally biased stretch (polar residues) spans E155–R165. Low complexity-rich tracts occupy residues E178–L195 and Q224–Q243. Polar residues-rich tracts occupy residues I254–I265 and A272–P281. A compositionally biased stretch (low complexity) spans N306 to N323. 8 LRR repeats span residues K344–I365, E370–K391, S392–E413, S416–I437, N439–S461, Q462–I484, N485–V506, and N507–L528. Residues N554–N577 form a disordered region. The region spanning I632–C773 is the Tyrosine-protein phosphatase domain. C717 acts as the Phosphocysteine intermediate in catalysis. A disordered region spans residues I810–K856.

It belongs to the protein-tyrosine phosphatase family. Non-receptor class dual specificity subfamily.

The catalysed reaction is O-phospho-L-tyrosyl-[protein] + H2O = L-tyrosyl-[protein] + phosphate. It catalyses the reaction O-phospho-L-seryl-[protein] + H2O = L-seryl-[protein] + phosphate. The enzyme catalyses O-phospho-L-threonyl-[protein] + H2O = L-threonyl-[protein] + phosphate. Functionally, probable phosphatase with dual specificity toward Ser/Thr and Tyr-containing proteins. This chain is MAP kinase phosphatase with leucine-rich repeats protein 3 (mpl3), found in Dictyostelium discoideum (Social amoeba).